A 53-amino-acid polypeptide reads, in one-letter code: Small, acid-soluble spore protein K (53 aa).

The disordered stretch occupies residues 1–53 (MRNKERNFPNQNNNKFEGEPRAKAEYASKRANGTTNTHPQERMHASGKRDDNF). Composition is skewed to basic and acidic residues over residues 16 to 28 (FEGEPRAKAEYAS) and 39 to 53 (PQERMHASGKRDDNF).

It belongs to the SspK family.

The protein resides in the spore core. The chain is Small, acid-soluble spore protein K from Geobacillus sp. (strain WCH70).